The following is a 164-amino-acid chain: Diphosphoinositol polyphosphate phosphohydrolase 3-alpha (164 aa).

Substrate-binding positions include Arg-9, 17–19 (KKR), and 38–40 (SSR). The Nudix hydrolase domain maps to 17 to 144 (KKRAACLCFR…VHAEYLEKLK (128 aa)). The Mg(2+) site is built by Gly-49 and Glu-65. Residues 50–71 (GGMEPEEEPDGAAVREVYEEAG) carry the Nudix box motif. Glu-68 functions as the Proton acceptor in the catalytic mechanism. Glu-69 is a Mg(2+) binding site. Substrate contacts are provided by residues 89–91 (RKH), Arg-115, and Lys-133. The tract at residues 144–164 (KLGGSPTNGNSAAPSPPESEP) is disordered.

The protein belongs to the Nudix hydrolase family. DIPP subfamily. It depends on Mg(2+) as a cofactor. Mn(2+) serves as cofactor. In terms of tissue distribution, mainly expressed in testis, liver kidney and, at lower level, in heart, brain, spleen, lung and skeletal muscle.

It is found in the cytoplasm. The enzyme catalyses diphospho-myo-inositol polyphosphate + H2O = myo-inositol polyphosphate + phosphate.. It carries out the reaction P(1),P(6)-bis(5'-adenosyl) hexaphosphate + H2O = adenosine 5'-pentaphosphate + AMP + 2 H(+). It catalyses the reaction P(1),P(5)-bis(5'-adenosyl) pentaphosphate + H2O = adenosine 5'-tetraphosphate + AMP + 2 H(+). Its function is as follows. Cleaves a beta-phosphate from the diphosphate groups in PP-InsP5 (diphosphoinositol pentakisphosphate), suggesting that it may play a role in signal transduction. Also able to catalyze the hydrolysis of dinucleoside oligophosphates, with Ap6A and Ap5A being the preferred substrates. The major reaction products are ADP and p4a from Ap6A and ADP and ATP from Ap5A. Also able to hydrolyze 5-phosphoribose 1-diphosphate; however, the relevance of such activity in vivo remains unclear. The polypeptide is Diphosphoinositol polyphosphate phosphohydrolase 3-alpha (Mus musculus (Mouse)).